We begin with the raw amino-acid sequence, 505 residues long: L-carnitine/gamma-butyrobetaine antiporter (505 aa).

Helical transmembrane passes span 10–30, 50–70, 92–112, 143–163, 195–215, 231–251, 263–283, 316–336, 347–367, 403–423, 446–466, and 475–495; these read IEPK…WLTV, IWGW…FWLV, IFMM…SIEI, GPLP…FFFV, FYLV…TPLV, LDAI…ACGL, SYLS…SFIM, WTVF…IFLA, LCFG…TVLG, LSTA…VTLI, LLVR…LLAL, and AIIA…LSFI.

It belongs to the BCCT transporter (TC 2.A.15) family. CaiT subfamily. Homotrimer.

The protein localises to the cell inner membrane. The catalysed reaction is 4-(trimethylamino)butanoate(in) + (R)-carnitine(out) = 4-(trimethylamino)butanoate(out) + (R)-carnitine(in). The protein operates within amine and polyamine metabolism; carnitine metabolism. Functionally, catalyzes the exchange of L-carnitine for gamma-butyrobetaine. The chain is L-carnitine/gamma-butyrobetaine antiporter from Salmonella arizonae (strain ATCC BAA-731 / CDC346-86 / RSK2980).